The primary structure comprises 810 residues: ATP-dependent RNA helicase dbp4 (810 aa).

The interval 1-28 is disordered; the sequence is MAPAAGPRTGKHAKPPRSKTLKRKRGQD. Residues 9 to 25 show a composition bias toward basic residues; sequence TGKHAKPPRSKTLKRKR. The Q motif signature appears at 47-75; it reads KSFSDLPLSEPTASGLASSHYKTLTDIQS. The 175-residue stretch at 78–252 folds into the Helicase ATP-binding domain; the sequence is ISHALKGRDV…RLSLQDPEYV (175 aa). 91-98 contacts ATP; it reads AKTGSGKT. The DEAD box signature appears at 200 to 203; it reads DEAD. The region spanning 278–437 is the Helicase C-terminal domain; it reads KLDILWSFIR…SIKDQLQNMC (160 aa). Disordered stretches follow at residues 494 to 542, 590 to 615, and 690 to 810; these read GDDT…DRMF, AGDKDLGSSSDEDDESEKGDKKDVKV, and ERTR…GLLG. Residues 522 to 542 show a composition bias toward basic and acidic residues; that stretch reads GEKKSKKKEEPQVRTKYDRMF. Over residues 690 to 704 the composition is skewed to basic and acidic residues; it reads ERTRMADMEDKEIAK. Residues 705-714 show a composition bias toward basic residues; sequence QKRREKKEKR. Basic and acidic residues predominate over residues 764–786; that stretch reads KFTEANDREEAEPWYKKSKKPSD.

It belongs to the DEAD box helicase family. DDX10/DBP4 subfamily. In terms of assembly, interacts with the U3 and U14 snoRNAs. Associates with pre-ribosomal complexes.

It localises to the nucleus. The protein resides in the nucleolus. The enzyme catalyses ATP + H2O = ADP + phosphate + H(+). ATP-dependent RNA helicase required for ribosome biogenesis. Involved in the release of U14 snoRNA in pre-ribosomal complexes. Required for pre-rRNA cleavage at site A2. The polypeptide is ATP-dependent RNA helicase dbp4 (dbp4) (Neosartorya fischeri (strain ATCC 1020 / DSM 3700 / CBS 544.65 / FGSC A1164 / JCM 1740 / NRRL 181 / WB 181) (Aspergillus fischerianus)).